Reading from the N-terminus, the 68-residue chain is Prokaryotic ubiquitin-like protein Pup (68 aa).

The segment at Met1 to Met37 is disordered. The interval Asp24 to Phe62 is ARC ATPase binding. Deamidated glutamine is present on Gln68. An Isoglutamyl lysine isopeptide (Gln-Lys) (interchain with K-? in acceptor proteins) cross-link involves residue Gln68.

Belongs to the prokaryotic ubiquitin-like protein family. In terms of assembly, strongly interacts with the proteasome-associated ATPase ARC through a hydrophobic interface; the interacting region of Pup lies in its C-terminal half. There is one Pup binding site per ARC hexamer ring. In terms of processing, is modified by deamidation of its C-terminal glutamine to glutamate by the deamidase Dop, a prerequisite to the subsequent pupylation process.

It participates in protein degradation; proteasomal Pup-dependent pathway. In terms of biological role, protein modifier that is covalently attached to lysine residues of substrate proteins, thereby targeting them for proteasomal degradation. The tagging system is termed pupylation. The protein is Prokaryotic ubiquitin-like protein Pup of Kocuria rhizophila (strain ATCC 9341 / DSM 348 / NBRC 103217 / DC2201).